A 373-amino-acid chain; its full sequence is tRNA pseudouridine synthase Pus10 (373 aa).

Residue Asp197 is the Nucleophile of the active site. Substrate is bound by residues Tyr265 and Tyr336.

It belongs to the pseudouridine synthase Pus10 family.

The enzyme catalyses uridine(54) in tRNA = pseudouridine(54) in tRNA. It carries out the reaction uridine(55) in tRNA = pseudouridine(55) in tRNA. In terms of biological role, responsible for synthesis of pseudouridine from uracil-54 and uracil-55 in the psi GC loop of transfer RNAs. The chain is tRNA pseudouridine synthase Pus10 from Korarchaeum cryptofilum (strain OPF8).